The primary structure comprises 301 residues: Glutamyl-Q tRNA(Asp) synthetase (301 aa).

L-glutamate contacts are provided by residues 8-12 and E44; that span reads RFAPS. The short motif at 11 to 21 is the 'HIGH' region element; the sequence is PSPTGPLHFGS. Zn(2+) contacts are provided by C100, C102, Y122, and C126. Positions 180 and 198 each coordinate L-glutamate. A 'KMSKS' region motif is present at residues 236 to 240; sequence KLSKQ. K239 contributes to the ATP binding site.

It belongs to the class-I aminoacyl-tRNA synthetase family. GluQ subfamily. Zn(2+) is required as a cofactor.

Functionally, catalyzes the tRNA-independent activation of glutamate in presence of ATP and the subsequent transfer of glutamate onto a tRNA(Asp). Glutamate is transferred on the 2-amino-5-(4,5-dihydroxy-2-cyclopenten-1-yl) moiety of the queuosine in the wobble position of the QUC anticodon. This Dechloromonas aromatica (strain RCB) protein is Glutamyl-Q tRNA(Asp) synthetase.